We begin with the raw amino-acid sequence, 236 residues long: 2,3,4,5-tetrahydropyridine-2,6-dicarboxylate N-acetyltransferase (236 aa).

Belongs to the transferase hexapeptide repeat family. DapH subfamily.

The enzyme catalyses (S)-2,3,4,5-tetrahydrodipicolinate + acetyl-CoA + H2O = L-2-acetamido-6-oxoheptanedioate + CoA. The protein operates within amino-acid biosynthesis; L-lysine biosynthesis via DAP pathway; LL-2,6-diaminopimelate from (S)-tetrahydrodipicolinate (acetylase route): step 1/3. Catalyzes the transfer of an acetyl group from acetyl-CoA to tetrahydrodipicolinate. The chain is 2,3,4,5-tetrahydropyridine-2,6-dicarboxylate N-acetyltransferase from Lactobacillus helveticus (strain DPC 4571).